The following is a 1388-amino-acid chain: Dicer-like protein 2 (1388 aa).

The Helicase ATP-binding domain maps to 23-203; that stretch reads MLEASMKENI…LLTVESNLDA (181 aa). 36 to 43 provides a ligand contact to ATP; that stretch reads MDTGSGKT. Positions 144 to 147 match the DEAH box motif; that stretch reads DEAH. One can recognise a Helicase C-terminal domain in the interval 371-537; it reads SLLNFLDSLD…DDERQLQSVS (167 aa). One can recognise a Dicer dsRNA-binding fold domain in the interval 564 to 658; it reads AMAHLHHFCA…LPLTKRPELK (95 aa). 2 RNase III domains span residues 919 to 1059 and 1098 to 1281; these read ATRL…MDGG and NERL…VDSG. Glutamate 1137, aspartate 1267, and glutamate 1270 together coordinate Mg(2+).

Belongs to the helicase family. Dicer subfamily. It depends on Mg(2+) as a cofactor. The cofactor is Mn(2+).

Its function is as follows. Dicer-like endonuclease involved in cleaving double-stranded RNA in the RNA interference (RNAi) pathway. Produces 21 to 25 bp dsRNAs (siRNAs) which target the selective destruction of homologous RNAs leading to sequence-specific suppression of gene expression, called post-transcriptional gene silencing (PTGS). Part of a broad host defense response against viral infection and transposons. The protein is Dicer-like protein 2 (dcl2) of Neosartorya fischeri (strain ATCC 1020 / DSM 3700 / CBS 544.65 / FGSC A1164 / JCM 1740 / NRRL 181 / WB 181) (Aspergillus fischerianus).